The chain runs to 99 residues: Teretoxin Tsu6.4 (99 aa).

The signal sequence occupies residues 1-21; the sequence is MRLLLILVLLTPVIVAFSVDE. Residues 22 to 53 constitute a propeptide that is removed on maturation; it reads ELNNADGANAASFTADQEVRHKRNLFPAIARR.

In terms of processing, contains 3 disulfide bonds. In terms of tissue distribution, expressed by the venom duct.

The protein localises to the secreted. This Terebra subulata (Chocolate spotted auger) protein is Teretoxin Tsu6.4.